We begin with the raw amino-acid sequence, 538 residues long: Phosphatidylethanolamine transferase Mcr-2 (538 aa).

The next 5 membrane-spanning stretches (helical) occupy residues 14–34, 47–67, 72–92, 121–141, and 161–181; these read PFVL…LTFF, LGFI…IVVL, YVLK…SYFT, LAFF…VAVA, and VSLV…ASFF. Residues E244 and T283 each coordinate Zn(2+). Cystine bridges form between C279-C289, C354-C362, and C412-C420. T283 is subject to Phosphothreonine. Zn(2+)-binding residues include D463 and H464.

Belongs to the phosphoethanolamine transferase family. As to quaternary structure, monomer. In terms of processing, phosphorylated at Thr-283; may represent an intermediate in the catalytic mechanism.

Its subcellular location is the cell inner membrane. The enzyme catalyses lipid A (E. coli) + a 1,2-diacyl-sn-glycero-3-phosphoethanolamine + H(+) = lipid A 4'-(2-aminoethyl diphosphate) (E. coli) + a 1,2-diacyl-sn-glycerol. Its function is as follows. Probably catalyzes the addition of a phosphoethanolamine moiety to lipid A. Phosphoethanolamine modification of lipid A confers polymyxin resistance. Confers resistance to polymyxin-type antibiotics such as colistin. This Escherichia coli protein is Phosphatidylethanolamine transferase Mcr-2.